Here is a 616-residue protein sequence, read N- to C-terminus: MKCLRWRSNRHRIYLLVACGALFLLNRHLTQEESRIDEEDEELTQVDVNEDDKKIECEPPGSIESKCIADNGKSMKCWKDEEDVYFPVSYLKKRFDMTGKLGKDGSTFELYTSYAKMRSPDSTYDPLGPFGHFSTYSVETRDRVRCVSAKTDVPMSTQWDPIPYYYPIQISQYGLQHYSRMKLDSISNKSEASPKDDVILGVNSKEWKGAAGMHETTERLFFNDEQMGKVVNISAGAALANAGAYVYLDKSPDLHVISFDWKPYEANSSFTVLAKMKQDDLLVLINYVYSEGNGKCVWQEEERISDDYIVQKPKKDGQVSYSYSYIGNSPIGEWSTVTRDLLVDVARALSSGDNRKKDDNVVLHAGDLRLVSLGFRGELTVKQKITQRREQHSHAFYAAADWLVKNQNDRGGWSVPVERSIAERKLVLPPGWHSAMAQGHGISVLTRAFKHFNDEKYLKSAAKALKLFKINSSDGGVRGEFFGNIWYEEYPTTPGSFVLNGFLYSLIGLYDLSQLELMIDENDETMRAKIQEAQELYSAGVRSLKQLLPLYDTGSGTIYDLRHVALGTAPNLARWDYHAVHVYLLKWIAGIEKDEVLSKTADRWIGYAYGKRAKHN.

Over 1-12 (MKCLRWRSNRHR) the chain is Cytoplasmic. A helical; Signal-anchor for type II membrane protein transmembrane segment spans residues 13–29 (IYLLVACGALFLLNRHL). Residues 30–616 (TQEESRIDEE…YAYGKRAKHN (587 aa)) lie on the Extracellular side of the membrane. Residues Tyr136, 141–143 (RDR), and Gln169 contribute to the substrate site. N-linked (GlcNAc...) asparagine glycosylation is found at Asn188, Asn232, Asn267, and Asn471. Residues Tyr504, Arg562, and 574-580 (RWDYHAV) contribute to the substrate site.

The protein belongs to the D-glucuronyl C5-epimerase family. As to quaternary structure, homodimer. In terms of tissue distribution, expression in comma stage embryos is strong in the hypodermis and intestine and weaker in the head region. In late embryos, larval, and adult stages, expressed primarily in hypodermis and intestine.

The protein localises to the cell membrane. The protein resides in the secreted. Its subcellular location is the extracellular space. It is found in the extracellular matrix. It localises to the basement membrane. The catalysed reaction is [heparosan-N-sulfate](n) = [heparan-N-sulfate](n). The protein operates within glycan metabolism; heparan sulfate biosynthesis. It functions in the pathway glycan metabolism; heparin biosynthesis. Functionally, converts D-glucuronic acid residues adjacent to N-sulfate sugar residues to L-iduronic acids. Plays a role in the early migration of AQR and PQR neurons, which descend from the Q neuroblasts. The polypeptide is D-glucuronyl C5-epimerase (hse-5) (Caenorhabditis elegans).